The chain runs to 255 residues: Diphthine synthase (255 aa).

Residues L9, D85, V88, 113–114 (SI), L164, A207, and H232 contribute to the S-adenosyl-L-methionine site.

The protein belongs to the diphthine synthase family. As to quaternary structure, homodimer.

It carries out the reaction 2-[(3S)-amino-3-carboxypropyl]-L-histidyl-[translation elongation factor 2] + 3 S-adenosyl-L-methionine = diphthine-[translation elongation factor 2] + 3 S-adenosyl-L-homocysteine + 3 H(+). It participates in protein modification; peptidyl-diphthamide biosynthesis. S-adenosyl-L-methionine-dependent methyltransferase that catalyzes the trimethylation of the amino group of the modified target histidine residue in translation elongation factor 2 (EF-2), to form an intermediate called diphthine. The three successive methylation reactions represent the second step of diphthamide biosynthesis. In Methanococcus vannielii (strain ATCC 35089 / DSM 1224 / JCM 13029 / OCM 148 / SB), this protein is Diphthine synthase.